The sequence spans 86 residues: Large ribosomal subunit protein bL31 (86 aa).

The segment at 65–86 (YRMASSDSSEQKDKSSEEKKES) is disordered. Positions 73–86 (SEQKDKSSEEKKES) are enriched in basic and acidic residues.

Belongs to the bacterial ribosomal protein bL31 family. Type A subfamily. In terms of assembly, part of the 50S ribosomal subunit.

Binds the 23S rRNA. The sequence is that of Large ribosomal subunit protein bL31 from Prochlorococcus marinus (strain NATL1A).